A 193-amino-acid chain; its full sequence is Bifunctional protein PyrR (193 aa).

Substrate is bound by residues 48–49, Arg89, Arg93, 110–118, Arg143, and Val167; these read TR and DDVLFSGRT. A PRPP-binding motif is present at residues 106 to 118; that stretch reads VVLVDDVLFSGRT.

This sequence belongs to the purine/pyrimidine phosphoribosyltransferase family. PyrR subfamily.

The catalysed reaction is UMP + diphosphate = 5-phospho-alpha-D-ribose 1-diphosphate + uracil. Regulates the transcription of the pyrimidine nucleotide (pyr) operon in response to exogenous pyrimidines. Its function is as follows. Also displays a weak uracil phosphoribosyltransferase activity which is not physiologically significant. The sequence is that of Bifunctional protein PyrR from Streptomyces coelicolor (strain ATCC BAA-471 / A3(2) / M145).